Reading from the N-terminus, the 425-residue chain is Histone-binding protein RBBP7 (425 aa).

WD repeat units follow at residues 47–122 (QWLP…KINH), 128–173 (RARY…LRLR), 181–217 (GLSW…KVVD), 228–269 (VVED…HSVD), 275–312 (VNCL…LHSF), 318–369 (EIFQ…LFIH), and 376–403 (ISDF…IWQM).

Belongs to the WD repeat RBAP46/RBAP48/MSI1 family. As to quaternary structure, binds directly to helix 1 of the histone fold of histone H4, a region that is not accessible when H4 is in chromatin.

It is found in the nucleus. Its function is as follows. Core histone-binding subunit that may target chromatin remodeling factors, histone acetyltransferases and histone deacetylases to their histone substrates in a manner that is regulated by nucleosomal DNA. Component of several complexes which regulate chromatin metabolism. This is Histone-binding protein RBBP7 (rbbp7) from Xenopus tropicalis (Western clawed frog).